Consider the following 219-residue polypeptide: Octanoyltransferase (219 aa).

One can recognise a BPL/LPL catalytic domain in the interval 32-207 (ENSQDEIWIV…TLSQELGLDK (176 aa)). Substrate is bound by residues 71–78 (RGGQVTYH), 138–140 (SLG), and 151–153 (GLA). The active-site Acyl-thioester intermediate is the cysteine 169.

Belongs to the LipB family.

The protein resides in the cytoplasm. The enzyme catalyses octanoyl-[ACP] + L-lysyl-[protein] = N(6)-octanoyl-L-lysyl-[protein] + holo-[ACP] + H(+). The protein operates within protein modification; protein lipoylation via endogenous pathway; protein N(6)-(lipoyl)lysine from octanoyl-[acyl-carrier-protein]: step 1/2. In terms of biological role, catalyzes the transfer of endogenously produced octanoic acid from octanoyl-acyl-carrier-protein onto the lipoyl domains of lipoate-dependent enzymes. Lipoyl-ACP can also act as a substrate although octanoyl-ACP is likely to be the physiological substrate. The sequence is that of Octanoyltransferase from Shewanella halifaxensis (strain HAW-EB4).